A 159-amino-acid polypeptide reads, in one-letter code: Thymic stromal lymphopoietin (159 aa).

An N-terminal signal peptide occupies residues 1–28 (MFPFALLYVLSVSFRKIFILQLVGLVLT). Cystine bridges form between Cys34-Cys110, Cys69-Cys75, and Cys90-Cys137. Asn64 carries N-linked (GlcNAc...) asparagine glycosylation. Asn119 is a glycosylation site (N-linked (GlcNAc...) asparagine).

Interacts with a receptor composed of CRLF2 and IL7R. Binding of TSLP to CRLF2/TSLPR is a mechanistic prerequisite for recruitment of IL7R to the high-affinity ternary complex. As to expression, isoform 1 is expressed in a number of tissues including heart, liver and prostate. Isoform 2 is the predominant form in keratinocytes of oral mucosa, skin and in salivary glands. It is secreted into saliva.

It is found in the secreted. Cytokine that induces the release of T-cell-attracting chemokines from monocytes and, in particular, enhances the maturation of CD11c(+) dendritic cells. Can induce allergic inflammation by directly activating mast cells. Functionally, may act as an antimicrobial peptide in the oral cavity and on the skin. The sequence is that of Thymic stromal lymphopoietin (TSLP) from Homo sapiens (Human).